Reading from the N-terminus, the 157-residue chain is Transmembrane protein 50A (157 aa).

The residue at position 2 (serine 2) is an N-acetylserine. Serine 2 carries the phosphoserine modification. 4 consecutive transmembrane segments (helical) span residues 26–46, 58–78, 95–115, and 126–146; these read IAAG…AVMY, TCGV…NGQV, IWLF…MWIL, and VVYP…GGLV.

This sequence belongs to the UPF0220 family.

Its subcellular location is the membrane. The protein is Transmembrane protein 50A (Tmem50a) of Mus musculus (Mouse).